Here is a 208-residue protein sequence, read N- to C-terminus: Large ribosomal subunit protein uL4 (208 aa).

The segment at Arg-45–Gly-96 is disordered. The segment covering Gly-69 to Ser-80 has biased composition (polar residues).

This sequence belongs to the universal ribosomal protein uL4 family. Part of the 50S ribosomal subunit.

Functionally, one of the primary rRNA binding proteins, this protein initially binds near the 5'-end of the 23S rRNA. It is important during the early stages of 50S assembly. It makes multiple contacts with different domains of the 23S rRNA in the assembled 50S subunit and ribosome. Its function is as follows. Forms part of the polypeptide exit tunnel. This chain is Large ribosomal subunit protein uL4, found in Chlorobium phaeovibrioides (strain DSM 265 / 1930) (Prosthecochloris vibrioformis (strain DSM 265)).